Here is a 350-residue protein sequence, read N- to C-terminus: Protein RecA (350 aa).

ATP is bound at residue 67–74 (GPESSGKT).

This sequence belongs to the RecA family.

It localises to the cytoplasm. Can catalyze the hydrolysis of ATP in the presence of single-stranded DNA, the ATP-dependent uptake of single-stranded DNA by duplex DNA, and the ATP-dependent hybridization of homologous single-stranded DNAs. It interacts with LexA causing its activation and leading to its autocatalytic cleavage. This is Protein RecA from Wolinella succinogenes (strain ATCC 29543 / DSM 1740 / CCUG 13145 / JCM 31913 / LMG 7466 / NCTC 11488 / FDC 602W) (Vibrio succinogenes).